Reading from the N-terminus, the 511-residue chain is Chaperone protein HscA (511 aa).

Belongs to the heat shock protein 70 family.

Chaperone involved in the maturation of iron-sulfur cluster-containing proteins. Has a low intrinsic ATPase activity which is markedly stimulated by HscB. Involved in the maturation of IscU. This is Chaperone protein HscA (hscA) from Buchnera aphidicola subsp. Baizongia pistaciae (strain Bp).